Here is a 552-residue protein sequence, read N- to C-terminus: Cation/acetate symporter ActP (552 aa).

The next 14 helical transmembrane spans lie at 6–26 (LLAVLALLLSGPVVAADAIAG), 35–55 (MEAIVMFLIFVAMTLGITYWA), 78–98 (GLAMAGDFMSAASFLGISALV), 103–123 (FDGLIYSLGFLVGWPIILFLI), 151–171 (LSACGSLVVVALYLIAQMVGA), 185–205 (VAVVLVGILMVMYVLFGGMLA), 208–228 (WVQIIKAVLLLFGASFMAIMV), 264–284 (ISALSLGLGLMFGTAGLPHIL), 305–325 (GLMGYFYFLTFIIGFGAILLV), 357–377 (LFLGFISAVAFATILAVVAGL), 407–427 (VSKITVVALGVVAILLGILFE), 431–451 (IAFMVGLAFSIAASCNFPIIL), 467–487 (GGWLGLLTAVILMILGPTIWV), and 496–516 (IFPYEYPALFSMLVAFIGTWL).

The protein belongs to the sodium:solute symporter (SSF) (TC 2.A.21) family.

It is found in the cell inner membrane. In terms of biological role, transports acetate. The protein is Cation/acetate symporter ActP of Erwinia tasmaniensis (strain DSM 17950 / CFBP 7177 / CIP 109463 / NCPPB 4357 / Et1/99).